Reading from the N-terminus, the 267-residue chain is Nanos homolog 1 (267 aa).

Positions 40 to 56 (FSSWNDYLGLATLITRA) are essential for its translational repressor activity. Residues 57 to 94 (SDRGSPHEGPGPTAAGPTMGPPEDDEDDDGEEPEAGGR) form a disordered region. The span at 78–90 (PEDDEDDDGEEPE) shows a compositional bias: acidic residues. The Nanos-type zinc finger occupies 188–242 (VCVFCRNNKEAVALYTTHILKGPDGRVLCPVLRRYTCPLCGASGDNAHTIKYCPL). Residues Cys-189, Cys-192, His-205, Cys-216, Cys-224, Cys-227, His-235, and Cys-240 each contribute to the Zn(2+) site. 2 consecutive short sequence motifs (C2HC) follow at residues 189 to 216 (CVFCRNNKEAVALYTTHILKGPDGRVLC) and 224 to 240 (CPLCGASGDNAHTIKYC). The disordered stretch occupies residues 243–267 (SKVPPPTVRPPPRSNRDSLPSKKLR). Residues 244–255 (KVPPPTVRPPPR) show a composition bias toward pro residues. Over residues 256–267 (SNRDSLPSKKLR) the composition is skewed to basic and acidic residues.

The protein belongs to the nanos family. As to quaternary structure, interacts with PUM2, SNAPIN and CTNNB1. Interacts (via N-terminal region) with CTNND1. Interacts with DDX20 (via N-terminal region). Expressed in the oocyte. Transiently expressed in eight-cell embryos. At 12.5 dpc, it is re-expressed in the central nervous system and the expression continues in the adult brain, in which the hippocampal formation is the predominant region. Expressed in the seminiferous tubules of mature testis, but not in the primordial germ cells.

It is found in the cytoplasm. It localises to the perinuclear region. Functionally, may act as a translational repressor which regulates translation of specific mRNAs by forming a complex with PUM2 that associates with the 3'-UTR of mRNA targets. Capable of interfering with the proadhesive and anti-invasive functions of E-cadherin. Up-regulates the production of MMP14 to promote tumor cell invasion. Not essential for normal development. This is Nanos homolog 1 (Nanos1) from Mus musculus (Mouse).